Reading from the N-terminus, the 203-residue chain is Ribosomal RNA large subunit methyltransferase E (203 aa).

Residues G51, W53, D69, D85, and D108 each coordinate S-adenosyl-L-methionine. K148 serves as the catalytic Proton acceptor.

This sequence belongs to the class I-like SAM-binding methyltransferase superfamily. RNA methyltransferase RlmE family.

The protein resides in the cytoplasm. The enzyme catalyses uridine(2552) in 23S rRNA + S-adenosyl-L-methionine = 2'-O-methyluridine(2552) in 23S rRNA + S-adenosyl-L-homocysteine + H(+). Functionally, specifically methylates the uridine in position 2552 of 23S rRNA at the 2'-O position of the ribose in the fully assembled 50S ribosomal subunit. The chain is Ribosomal RNA large subunit methyltransferase E from Methanosphaerula palustris (strain ATCC BAA-1556 / DSM 19958 / E1-9c).